Here is a 585-residue protein sequence, read N- to C-terminus: Arginine--tRNA ligase (585 aa).

Positions 131 to 141 (ANPTGPMHVGH) match the 'HIGH' region motif.

The protein belongs to the class-I aminoacyl-tRNA synthetase family. In terms of assembly, monomer.

The protein localises to the cytoplasm. The catalysed reaction is tRNA(Arg) + L-arginine + ATP = L-arginyl-tRNA(Arg) + AMP + diphosphate. This Rhizobium etli (strain ATCC 51251 / DSM 11541 / JCM 21823 / NBRC 15573 / CFN 42) protein is Arginine--tRNA ligase.